Here is a 126-residue protein sequence, read N- to C-terminus: Large ribosomal subunit protein bL17 (126 aa).

The protein belongs to the bacterial ribosomal protein bL17 family. As to quaternary structure, part of the 50S ribosomal subunit. Contacts protein L32.

In Magnetococcus marinus (strain ATCC BAA-1437 / JCM 17883 / MC-1), this protein is Large ribosomal subunit protein bL17.